Reading from the N-terminus, the 133-residue chain is ATP synthase epsilon chain, chloroplastic (133 aa).

The protein belongs to the ATPase epsilon chain family. As to quaternary structure, F-type ATPases have 2 components, CF(1) - the catalytic core - and CF(0) - the membrane proton channel. CF(1) has five subunits: alpha(3), beta(3), gamma(1), delta(1), epsilon(1). CF(0) has three main subunits: a, b and c.

The protein localises to the plastid. The protein resides in the chloroplast thylakoid membrane. Its function is as follows. Produces ATP from ADP in the presence of a proton gradient across the membrane. This Nephroselmis olivacea (Green alga) protein is ATP synthase epsilon chain, chloroplastic.